We begin with the raw amino-acid sequence, 269 residues long: S-adenosylmethionine decarboxylase proenzyme (269 aa).

Ser-118 (schiff-base intermediate with substrate; via pyruvic acid) is an active-site residue. Ser-118 carries the post-translational modification Pyruvic acid (Ser); by autocatalysis. The Proton acceptor; for processing activity role is filled by His-123. The Proton donor; for catalytic activity role is filled by Cys-146.

It belongs to the prokaryotic AdoMetDC family. Type 2 subfamily. As to quaternary structure, heterooctamer of four alpha and four beta chains arranged as a tetramer of alpha/beta heterodimers. Pyruvate serves as cofactor. In terms of processing, is synthesized initially as an inactive proenzyme. Formation of the active enzyme involves a self-maturation process in which the active site pyruvoyl group is generated from an internal serine residue via an autocatalytic post-translational modification. Two non-identical subunits are generated from the proenzyme in this reaction, and the pyruvate is formed at the N-terminus of the alpha chain, which is derived from the carboxyl end of the proenzyme. The post-translation cleavage follows an unusual pathway, termed non-hydrolytic serinolysis, in which the side chain hydroxyl group of the serine supplies its oxygen atom to form the C-terminus of the beta chain, while the remainder of the serine residue undergoes an oxidative deamination to produce ammonia and the pyruvoyl group blocking the N-terminus of the alpha chain.

The enzyme catalyses S-adenosyl-L-methionine + H(+) = S-adenosyl 3-(methylsulfanyl)propylamine + CO2. It participates in amine and polyamine biosynthesis; S-adenosylmethioninamine biosynthesis; S-adenosylmethioninamine from S-adenosyl-L-methionine: step 1/1. Catalyzes the decarboxylation of S-adenosylmethionine to S-adenosylmethioninamine (dcAdoMet), the propylamine donor required for the synthesis of the polyamines spermine and spermidine from the diamine putrescine. In Brevibacillus brevis (strain 47 / JCM 6285 / NBRC 100599), this protein is S-adenosylmethionine decarboxylase proenzyme.